Consider the following 63-residue polypeptide: Large ribosomal subunit protein uL29 (63 aa).

This sequence belongs to the universal ribosomal protein uL29 family.

This is Large ribosomal subunit protein uL29 from Shewanella baltica (strain OS223).